The sequence spans 172 residues: Signal peptidase complex catalytic subunit SEC11 (172 aa).

The Cytoplasmic portion of the chain corresponds to 1–14 (MLSSLQNPRQAAAQ). The chain crosses the membrane as a helical; Signal-anchor for type II membrane protein span at residues 15-35 (LMNFAMILSTAFMMWKGLSVA). At 36-172 (TDSPSPIVVV…MGLLVVIQRE (137 aa)) the chain is on the lumenal side. Active-site charge relay system residues include S49, H90, and D115. The tract at residues 158 to 169 (VMLGIMGLLVVI) is C-terminal short (CTS) helix.

This sequence belongs to the peptidase S26B family. As to quaternary structure, component of the signal peptidase complex (SPC) composed of a catalytic subunit SEC11 and three accessory subunits SPC1, SPC2 and SPC3. The complex induces a local thinning of the ER membrane which is used to measure the length of the signal peptide (SP) h-region of protein substrates. This ensures the selectivity of the complex towards h-regions shorter than 18-20 amino acids. SPC associates with the translocon complex.

It is found in the endoplasmic reticulum membrane. It carries out the reaction Cleavage of hydrophobic, N-terminal signal or leader sequences from secreted and periplasmic proteins.. Its function is as follows. Catalytic component of the signal peptidase complex (SPC) which catalyzes the cleavage of N-terminal signal sequences from nascent proteins as they are translocated into the lumen of the endoplasmic reticulum. Specifically cleaves N-terminal signal peptides that contain a hydrophobic alpha-helix (h-region) shorter than 18-20 amino acids. This Metarhizium robertsii (strain ARSEF 23 / ATCC MYA-3075) (Metarhizium anisopliae (strain ARSEF 23)) protein is Signal peptidase complex catalytic subunit SEC11 (SEC11).